A 361-amino-acid polypeptide reads, in one-letter code: Probable dual-specificity RNA methyltransferase RlmN (361 aa).

Residue E104 is the Proton acceptor of the active site. Residues 110–343 (HEYGNSVCVT…VTIRREQGHD (234 aa)) form the Radical SAM core domain. C117 and C348 form a disulfide bridge. Positions 124, 128, and 131 each coordinate [4Fe-4S] cluster. S-adenosyl-L-methionine-binding positions include 174–175 (GE), S206, 229–231 (SLH), and N305. C348 functions as the S-methylcysteine intermediate in the catalytic mechanism.

Belongs to the radical SAM superfamily. RlmN family. It depends on [4Fe-4S] cluster as a cofactor.

The protein localises to the cytoplasm. The enzyme catalyses adenosine(2503) in 23S rRNA + 2 reduced [2Fe-2S]-[ferredoxin] + 2 S-adenosyl-L-methionine = 2-methyladenosine(2503) in 23S rRNA + 5'-deoxyadenosine + L-methionine + 2 oxidized [2Fe-2S]-[ferredoxin] + S-adenosyl-L-homocysteine. It catalyses the reaction adenosine(37) in tRNA + 2 reduced [2Fe-2S]-[ferredoxin] + 2 S-adenosyl-L-methionine = 2-methyladenosine(37) in tRNA + 5'-deoxyadenosine + L-methionine + 2 oxidized [2Fe-2S]-[ferredoxin] + S-adenosyl-L-homocysteine. Specifically methylates position 2 of adenine 2503 in 23S rRNA and position 2 of adenine 37 in tRNAs. The polypeptide is Probable dual-specificity RNA methyltransferase RlmN (Bacillus licheniformis (strain ATCC 14580 / DSM 13 / JCM 2505 / CCUG 7422 / NBRC 12200 / NCIMB 9375 / NCTC 10341 / NRRL NRS-1264 / Gibson 46)).